The following is a 398-amino-acid chain: Phosphoglycerate kinase (398 aa).

Substrate is bound by residues 23–25, Arg-38, 61–64, Arg-122, and Arg-155; these read DFN and HMGK. Residues Lys-206, Gly-297, Glu-328, and 354 to 357 each bind ATP; that span reads GGDS.

This sequence belongs to the phosphoglycerate kinase family. As to quaternary structure, monomer.

The protein resides in the cytoplasm. It carries out the reaction (2R)-3-phosphoglycerate + ATP = (2R)-3-phospho-glyceroyl phosphate + ADP. The protein operates within carbohydrate degradation; glycolysis; pyruvate from D-glyceraldehyde 3-phosphate: step 2/5. This is Phosphoglycerate kinase from Clostridium botulinum (strain Langeland / NCTC 10281 / Type F).